A 769-amino-acid chain; its full sequence is Serine/threonine-protein kinase PLK4 (769 aa).

The 254-residue stretch at 14–267 (YEVQHLLGKG…LEAVLCHPFM (254 aa)) folds into the Protein kinase domain. ATP is bound by residues 20–28 (LGKGGFATV) and Lys43. The active-site Proton acceptor is the Asp138. The region spanning 381-498 (EDRISVPPLN…ARFVGLVKSK (118 aa)) is the Cryptic POLO box 1 (CPB1) domain. Positions 499-602 (TPKVTYFSTL…GRRPITDVQP (104 aa)) constitute a Cryptic POLO box 2 (CPB2) domain. The 80-residue stretch at 660–739 (PIKRINVPDI…IPNIQLKLKT (80 aa)) folds into the POLO box domain.

This sequence belongs to the protein kinase superfamily. Ser/Thr protein kinase family. CDC5/Polo subfamily. As to quaternary structure, homodimer. In terms of processing, ubiquitinated by the SCF(Slimb) ubiquitin ligase complex; leading to its degradation by the proteasome during interphase and regulating centriole number and ensuring the block to centriole reduplication.

The protein localises to the cytoplasm. Its subcellular location is the cytoskeleton. It is found in the microtubule organizing center. The protein resides in the centrosome. It localises to the centriole. It carries out the reaction L-seryl-[protein] + ATP = O-phospho-L-seryl-[protein] + ADP + H(+). It catalyses the reaction L-threonyl-[protein] + ATP = O-phospho-L-threonyl-[protein] + ADP + H(+). In terms of biological role, serine/threonine-protein kinase that plays a central role in centriole duplication. Able to trigger procentriole formation on the surface of the mother centriole cylinder, using mother centriole as a platform, leading to the recruitment of centriole biogenesis proteins such as sas-6. When overexpressed, it is able to induce centrosome amplification through the simultaneous generation of multiple procentrioles adjoining each parental centriole during S phase. Centrosome amplification following overexpression can initiate tumorigenesis, highlighting the importance of centrosome regulation in cancers. This Drosophila simulans (Fruit fly) protein is Serine/threonine-protein kinase PLK4 (SAK).